Reading from the N-terminus, the 160-residue chain is Small ribosomal subunit protein uS19 (160 aa).

Positions 1-27 are disordered; it reads MARQKFSGKGGKGKSKKGQQSTAPRRR.

This sequence belongs to the universal ribosomal protein uS19 family.

Its function is as follows. Protein S19 forms a complex with S13 that binds strongly to the 16S ribosomal RNA. The sequence is that of Small ribosomal subunit protein uS19 from Methanococcus vannielii (strain ATCC 35089 / DSM 1224 / JCM 13029 / OCM 148 / SB).